The primary structure comprises 275 residues: 4-hydroxy-tetrahydrodipicolinate reductase (275 aa).

Residues 8–13 (GATGRM), 100–102 (GTT), and 126–129 (SPNM) contribute to the NAD(+) site. Catalysis depends on histidine 160, which acts as the Proton donor/acceptor. Histidine 161 lines the (S)-2,3,4,5-tetrahydrodipicolinate pocket. Catalysis depends on lysine 164, which acts as the Proton donor. 170–171 (GT) serves as a coordination point for (S)-2,3,4,5-tetrahydrodipicolinate.

It belongs to the DapB family.

It localises to the cytoplasm. It catalyses the reaction (S)-2,3,4,5-tetrahydrodipicolinate + NAD(+) + H2O = (2S,4S)-4-hydroxy-2,3,4,5-tetrahydrodipicolinate + NADH + H(+). It carries out the reaction (S)-2,3,4,5-tetrahydrodipicolinate + NADP(+) + H2O = (2S,4S)-4-hydroxy-2,3,4,5-tetrahydrodipicolinate + NADPH + H(+). Its pathway is amino-acid biosynthesis; L-lysine biosynthesis via DAP pathway; (S)-tetrahydrodipicolinate from L-aspartate: step 4/4. Functionally, catalyzes the conversion of 4-hydroxy-tetrahydrodipicolinate (HTPA) to tetrahydrodipicolinate. The sequence is that of 4-hydroxy-tetrahydrodipicolinate reductase from Methanopyrus kandleri (strain AV19 / DSM 6324 / JCM 9639 / NBRC 100938).